The following is a 358-amino-acid chain: MRERLLAAERVKAIEWRDGTLRLLDQRLLPQEEVWLDHGSAAEVAKAIRDMVVRGAPAIGISAAYGIVLGARARLARGGDWRTALEEDFRLLADSRPTAVNLFWALNRMRERLERMKEGDRPLAVLEAEAISIHDSDREANLTMAQLGMELIRKQQSSPQNILTHCNTGALATGGFGTALGVIRAAHLEGLVNRIHADETRPWLQGSRLTAWELANEGIPVSLNVDSAAAHLMKTENITWVIVGADRITANGDVANKIGTYQLAVNAMHHGVRFMVVAPSSTIDMNLESGEDIPIEERDGRELLEIGGRRVAAEVDAYNPVFDVTPADLIDAIVTERGVVERPDAERMAALMSRKRLH.

Substrate-binding positions include 54–56, arginine 96, and glutamine 205; that span reads RGA. Aspartate 246 serves as the catalytic Proton donor. Substrate is bound at residue 256–257; it reads NK.

The protein belongs to the eIF-2B alpha/beta/delta subunits family. MtnA subfamily.

The enzyme catalyses 5-(methylsulfanyl)-alpha-D-ribose 1-phosphate = 5-(methylsulfanyl)-D-ribulose 1-phosphate. It participates in amino-acid biosynthesis; L-methionine biosynthesis via salvage pathway; L-methionine from S-methyl-5-thio-alpha-D-ribose 1-phosphate: step 1/6. In terms of biological role, catalyzes the interconversion of methylthioribose-1-phosphate (MTR-1-P) into methylthioribulose-1-phosphate (MTRu-1-P). This is Methylthioribose-1-phosphate isomerase from Pseudomonas paraeruginosa (strain DSM 24068 / PA7) (Pseudomonas aeruginosa (strain PA7)).